Consider the following 186-residue polypeptide: Phosphoheptose isomerase 1 (186 aa).

One can recognise an SIS domain in the interval 33–186; that stretch reads LCECLKKGGK…TLCQIIDESF (154 aa). 48 to 50 is a substrate binding site; it reads NGG. Zn(2+) contacts are provided by H57 and E61. Residues E61, 90 to 91, 116 to 118, S121, and Q168 each bind substrate; these read ND and STS. The Zn(2+) site is built by Q168 and H176.

It belongs to the SIS family. GmhA subfamily. Homotetramer. Requires Zn(2+) as cofactor.

It localises to the cytoplasm. The catalysed reaction is 2 D-sedoheptulose 7-phosphate = D-glycero-alpha-D-manno-heptose 7-phosphate + D-glycero-beta-D-manno-heptose 7-phosphate. The protein operates within carbohydrate biosynthesis; D-glycero-D-manno-heptose 7-phosphate biosynthesis; D-glycero-alpha-D-manno-heptose 7-phosphate and D-glycero-beta-D-manno-heptose 7-phosphate from sedoheptulose 7-phosphate: step 1/1. It participates in bacterial outer membrane biogenesis; LOS core biosynthesis. Catalyzes the isomerization of sedoheptulose 7-phosphate in D-glycero-D-manno-heptose 7-phosphate. This chain is Phosphoheptose isomerase 1 (gmhA1), found in Campylobacter jejuni subsp. jejuni serotype O:2 (strain ATCC 700819 / NCTC 11168).